Reading from the N-terminus, the 179-residue chain is Large ribosomal subunit protein uL5 (179 aa).

Belongs to the universal ribosomal protein uL5 family. As to quaternary structure, part of the 50S ribosomal subunit; part of the 5S rRNA/L5/L18/L25 subcomplex. Contacts the 5S rRNA and the P site tRNA. Forms a bridge to the 30S subunit in the 70S ribosome.

In terms of biological role, this is one of the proteins that bind and probably mediate the attachment of the 5S RNA into the large ribosomal subunit, where it forms part of the central protuberance. In the 70S ribosome it contacts protein S13 of the 30S subunit (bridge B1b), connecting the 2 subunits; this bridge is implicated in subunit movement. Contacts the P site tRNA; the 5S rRNA and some of its associated proteins might help stabilize positioning of ribosome-bound tRNAs. This Chromobacterium violaceum (strain ATCC 12472 / DSM 30191 / JCM 1249 / CCUG 213 / NBRC 12614 / NCIMB 9131 / NCTC 9757 / MK) protein is Large ribosomal subunit protein uL5.